A 565-amino-acid polypeptide reads, in one-letter code: NAD-dependent malic enzyme (565 aa).

Catalysis depends on Tyr104, which acts as the Proton donor. Arg157 contributes to the NAD(+) binding site. Lys175 acts as the Proton acceptor in catalysis. Residues Glu246, Asp247, and Asp270 each coordinate a divalent metal cation. NAD(+) contacts are provided by Asp270 and Asn418.

This sequence belongs to the malic enzymes family. As to quaternary structure, homotetramer. Mg(2+) serves as cofactor. Requires Mn(2+) as cofactor.

The enzyme catalyses (S)-malate + NAD(+) = pyruvate + CO2 + NADH. It carries out the reaction oxaloacetate + H(+) = pyruvate + CO2. The protein is NAD-dependent malic enzyme of Edwardsiella ictaluri (strain 93-146).